Reading from the N-terminus, the 456-residue chain is Enolase (456 aa).

Glutamine 167 contributes to the (2R)-2-phosphoglycerate binding site. The Proton donor role is filled by glutamate 209. Residues aspartate 250, glutamate 312, and aspartate 339 each contribute to the Mg(2+) site. (2R)-2-phosphoglycerate is bound by residues lysine 364, arginine 393, serine 394, and lysine 415. The active-site Proton acceptor is lysine 364.

This sequence belongs to the enolase family. Mg(2+) serves as cofactor.

Its subcellular location is the cytoplasm. The protein localises to the secreted. The protein resides in the cell surface. The enzyme catalyses (2R)-2-phosphoglycerate = phosphoenolpyruvate + H2O. Its pathway is carbohydrate degradation; glycolysis; pyruvate from D-glyceraldehyde 3-phosphate: step 4/5. Its function is as follows. Catalyzes the reversible conversion of 2-phosphoglycerate (2-PG) into phosphoenolpyruvate (PEP). It is essential for the degradation of carbohydrates via glycolysis. The polypeptide is Enolase (Mycoplasmopsis pulmonis (strain UAB CTIP) (Mycoplasma pulmonis)).